We begin with the raw amino-acid sequence, 285 residues long: Probable methyltransferase ltbC (285 aa).

A disordered region spans residues M1–Q22.

This sequence belongs to the class I-like SAM-binding methyltransferase superfamily. In terms of assembly, monomer.

Functionally, probable methyltransferase; part of the gene cluster that mediates the biosynthesis of luteodienoside A, a glycosylated polyketide consisting of an unusual 1-O-beta-D-glucopyranosyl-myo-inositol (glucinol) ester of 3-hydroxy-2,2,4-trimethylocta-4,6-dienoic acid. The HR-PKS ltbA produces the trimethylated polyketide chain from acetyl-CoA, malonyl-CoA and S-adenosylmethionine (SAM), and the ltbA cAT domain then uses glucinol produced by the glycosyltransferase ltbB as an offloading substrate to release luteodienoside A. Since ltbA and ltbB are sufficient for the biosynthesis of luteodienoside A, the functions of the methyltransferase ltbC and the FAD-binding monooxygenase ltbD within the pathway remain obscur. The sequence is that of Probable methyltransferase ltbC from Aspergillus luteorubrus.